The following is a 163-amino-acid chain: Nucleotide-binding protein YajQ (163 aa).

The protein belongs to the YajQ family.

In terms of biological role, nucleotide-binding protein. This chain is Nucleotide-binding protein YajQ, found in Shigella flexneri.